The chain runs to 289 residues: Acetyl-coenzyme A carboxylase carboxyl transferase subunit beta (289 aa).

The 262-residue stretch at 28–289 folds into the CoA carboxyltransferase N-terminal domain; it reads VMTKCPECKK…QGGEMAVWQS (262 aa). The Zn(2+) site is built by Cys32, Cys35, Cys51, and Cys54. The segment at 32-54 adopts a C4-type zinc-finger fold; that stretch reads CPECKKIMYTKELLKNLKVCVNC.

This sequence belongs to the AccD/PCCB family. As to quaternary structure, acetyl-CoA carboxylase is a heterohexamer composed of biotin carboxyl carrier protein (AccB), biotin carboxylase (AccC) and two subunits each of ACCase subunit alpha (AccA) and ACCase subunit beta (AccD). The cofactor is Zn(2+).

The protein resides in the cytoplasm. The enzyme catalyses N(6)-carboxybiotinyl-L-lysyl-[protein] + acetyl-CoA = N(6)-biotinyl-L-lysyl-[protein] + malonyl-CoA. The protein operates within lipid metabolism; malonyl-CoA biosynthesis; malonyl-CoA from acetyl-CoA: step 1/1. Functionally, component of the acetyl coenzyme A carboxylase (ACC) complex. Biotin carboxylase (BC) catalyzes the carboxylation of biotin on its carrier protein (BCCP) and then the CO(2) group is transferred by the transcarboxylase to acetyl-CoA to form malonyl-CoA. The sequence is that of Acetyl-coenzyme A carboxylase carboxyl transferase subunit beta from Bacillus cereus (strain ATCC 14579 / DSM 31 / CCUG 7414 / JCM 2152 / NBRC 15305 / NCIMB 9373 / NCTC 2599 / NRRL B-3711).